The primary structure comprises 166 residues: Phosphopantetheine adenylyltransferase (166 aa).

Serine 10 provides a ligand contact to substrate. Residues 10-11 and histidine 18 each bind ATP; that span reads SF. Substrate-binding residues include lysine 42, alanine 79, and arginine 93. ATP-binding positions include 94 to 96, glutamate 104, and 129 to 135; these read GLR and VRPITAT.

It belongs to the bacterial CoaD family. Homohexamer. Requires Mg(2+) as cofactor.

The protein resides in the cytoplasm. It catalyses the reaction (R)-4'-phosphopantetheine + ATP + H(+) = 3'-dephospho-CoA + diphosphate. Its pathway is cofactor biosynthesis; coenzyme A biosynthesis; CoA from (R)-pantothenate: step 4/5. In terms of biological role, reversibly transfers an adenylyl group from ATP to 4'-phosphopantetheine, yielding dephospho-CoA (dPCoA) and pyrophosphate. The chain is Phosphopantetheine adenylyltransferase from Methylobacterium nodulans (strain LMG 21967 / CNCM I-2342 / ORS 2060).